The following is a 301-amino-acid chain: Sulfate adenylyltransferase subunit 2 2 (301 aa).

It belongs to the PAPS reductase family. CysD subfamily. As to quaternary structure, heterodimer composed of CysD, the smaller subunit, and CysN.

It carries out the reaction sulfate + ATP + H(+) = adenosine 5'-phosphosulfate + diphosphate. It participates in sulfur metabolism; hydrogen sulfide biosynthesis; sulfite from sulfate: step 1/3. In terms of biological role, with CysN forms the ATP sulfurylase (ATPS) that catalyzes the adenylation of sulfate producing adenosine 5'-phosphosulfate (APS) and diphosphate, the first enzymatic step in sulfur assimilation pathway. APS synthesis involves the formation of a high-energy phosphoric-sulfuric acid anhydride bond driven by GTP hydrolysis by CysN coupled to ATP hydrolysis by CysD. This is Sulfate adenylyltransferase subunit 2 2 from Shewanella sediminis (strain HAW-EB3).